The following is a 328-amino-acid chain: Spermatogenesis- and oogenesis-specific basic helix-loop-helix-containing protein 1 (328 aa).

A bHLH domain is found at 53–104 (SCLRRNVISERERRKRMSLSCERLRALLPQFDGRREDMASVLEMSVQFLRLA). The interval 290 to 328 (EAGSALGSDVDDGTSFLLTAGPSSWPGEWGPGFRAGPPA) is disordered. Residues 310–321 (GPSSWPGEWGPG) are compositionally biased toward low complexity.

As to quaternary structure, forms both hetero- and homodimers with SOHLH2.

It is found in the cytoplasm. Its subcellular location is the nucleus. Transcription regulator of both male and female germline differentiation. Suppresses genes involved in spermatogonial stem cells maintenance, and induces genes important for spermatogonial differentiation. Coordinates oocyte differentiation without affecting meiosis I. This is Spermatogenesis- and oogenesis-specific basic helix-loop-helix-containing protein 1 (SOHLH1) from Homo sapiens (Human).